The sequence spans 353 residues: Basic membrane protein C (353 aa).

The N-terminal stretch at 1 to 16 (MFKRFIFITLSLLVFA) is a signal peptide. A lipid anchor (N-palmitoyl cysteine) is attached at C17. C17 is lipidated: S-diacylglycerol cysteine.

Belongs to the BMP lipoprotein family. Monomer.

It is found in the cell inner membrane. In terms of biological role, may be part of an ABC-type nucleoside uptake system involved in the purine salvage pathway. This is Basic membrane protein C (bmpC) from Borreliella burgdorferi (strain N40) (Borrelia burgdorferi).